The following is a 421-amino-acid chain: Gamma-glutamyl phosphate reductase (421 aa).

The protein belongs to the gamma-glutamyl phosphate reductase family.

The protein resides in the cytoplasm. The catalysed reaction is L-glutamate 5-semialdehyde + phosphate + NADP(+) = L-glutamyl 5-phosphate + NADPH + H(+). It participates in amino-acid biosynthesis; L-proline biosynthesis; L-glutamate 5-semialdehyde from L-glutamate: step 2/2. Functionally, catalyzes the NADPH-dependent reduction of L-glutamate 5-phosphate into L-glutamate 5-semialdehyde and phosphate. The product spontaneously undergoes cyclization to form 1-pyrroline-5-carboxylate. This Pseudomonas aeruginosa (strain UCBPP-PA14) protein is Gamma-glutamyl phosphate reductase.